Consider the following 257-residue polypeptide: 5'-nucleotidase SurE (257 aa).

A divalent metal cation-binding residues include Asp9, Asp10, Ser40, and Asn93.

Belongs to the SurE nucleotidase family. It depends on a divalent metal cation as a cofactor.

Its subcellular location is the cytoplasm. It catalyses the reaction a ribonucleoside 5'-phosphate + H2O = a ribonucleoside + phosphate. Its function is as follows. Nucleotidase that shows phosphatase activity on nucleoside 5'-monophosphates. The chain is 5'-nucleotidase SurE from Campylobacter hominis (strain ATCC BAA-381 / DSM 21671 / CCUG 45161 / LMG 19568 / NCTC 13146 / CH001A).